A 392-amino-acid polypeptide reads, in one-letter code: ADP-ribosylhydrolase ARH1 (392 aa).

Residues S79, D80, and D81 each coordinate Mg(2+). K109 serves as a coordination point for substrate. A substrate region spans residues I125–T127. Residue G159 participates in substrate binding. Substrate regions lie at residues H192–N194, F309–G311, and S315–S316. Mg(2+)-binding residues include D348, D350, and S351.

It belongs to the ADP-ribosylglycohydrolase family. In terms of assembly, monomer. Requires Mg(2+) as cofactor.

It carries out the reaction N(omega)-(ADP-D-ribosyl)-L-arginyl-[protein] + H2O = ADP-D-ribose + L-arginyl-[protein]. Its function is as follows. Specifically acts as an arginine mono-ADP-ribosylhydrolase by mediating the removal of mono-ADP-ribose attached to arginine residues on proteins. The protein is ADP-ribosylhydrolase ARH1 (adprh) of Dictyostelium discoideum (Social amoeba).